Reading from the N-terminus, the 353-residue chain is Outer membrane protein P2 (353 aa).

The N-terminal stretch at 1–20 is a signal peptide; sequence MKKTLAALIVGAFAASAANA.

The protein belongs to the Gram-negative porin family. As to quaternary structure, homotrimer.

Its subcellular location is the cell outer membrane. Its function is as follows. Forms pores that allow passive diffusion of small molecules across the outer membrane. The polypeptide is Outer membrane protein P2 (ompP2) (Haemophilus influenzae).